Consider the following 648-residue polypeptide: Replication restart protein PriA (648 aa).

One can recognise a Helicase ATP-binding domain in the interval threonine 131–leucine 297. Position 144 to 151 (glycine 144 to threonine 151) interacts with ATP. The DEAH box signature appears at aspartate 240–histidine 243. Residues cysteine 358, cysteine 361, cysteine 367, cysteine 370, cysteine 385, cysteine 388, cysteine 398, and cysteine 401 each coordinate Zn(2+). Positions lysine 393–arginine 548 constitute a Helicase C-terminal domain.

The protein belongs to the helicase family. PriA subfamily. As to quaternary structure, component of the replication restart primosome. Zn(2+) serves as cofactor.

It carries out the reaction Couples ATP hydrolysis with the unwinding of duplex DNA by translocating in the 3'-5' direction.. It catalyses the reaction ATP + H2O = ADP + phosphate + H(+). Functionally, initiates the restart of stalled replication forks, which reloads the replicative helicase on sites other than the origin of replication. Recognizes and binds to abandoned replication forks and remodels them to uncover a helicase loading site. Promotes assembly of the primosome at these replication forks. This chain is Replication restart protein PriA, found in Rickettsia felis (strain ATCC VR-1525 / URRWXCal2) (Rickettsia azadi).